A 509-amino-acid chain; its full sequence is Coiled-coil domain-containing protein 181 (509 aa).

The segment covering 60 to 82 has biased composition (basic and acidic residues); it reads EHTKQHSDPDKSLQDDVSPRRND. 2 disordered regions span residues 60–121 and 285–367; these read EHTK…EEDE and GEPL…EEKE. Over residues 320-334 the composition is skewed to polar residues; the sequence is RTQSARISPVTSTYC. A coiled-coil region spans residues 335–375; it reads LSPRQKELQKQLEQKREKLKREEEQRKIEEEKEKKRENDIV. Basic and acidic residues predominate over residues 338–367; the sequence is RQKELQKQLEQKREKLKREEEQRKIEEEKE.

This sequence belongs to the CCDC181 family. In terms of assembly, homodimer. Interacts with HOOK1. Interacts with HOOK2. Interacts with HOOK3.

It localises to the cytoplasm. Its subcellular location is the cytoskeleton. It is found in the cell projection. The protein localises to the cilium. The protein resides in the flagellum. In terms of biological role, microtubule-binding protein that localizes to the microtubular manchette of elongating spermatids. The chain is Coiled-coil domain-containing protein 181 from Macaca fascicularis (Crab-eating macaque).